Consider the following 478-residue polypeptide: Serine carboxypeptidase-like 33 (478 aa).

The first 33 residues, 1 to 33 (MNLTLPMKKQKFLLIISLLILLSLLHQDYHIEA), serve as a signal peptide directing secretion. Intrachain disulfides connect C95/C361, C257/C268, and C292/C330. N-linked (GlcNAc...) asparagine glycans are attached at residues N114 and N146. The active site involves S188. N263, N295, and N362 each carry an N-linked (GlcNAc...) asparagine glycan. Residues D398 and H451 contribute to the active site.

It belongs to the peptidase S10 family. As to expression, expressed in senescent leaves and flowers.

It is found in the secreted. Its function is as follows. Probable carboxypeptidase. The protein is Serine carboxypeptidase-like 33 (SCPL33) of Arabidopsis thaliana (Mouse-ear cress).